Reading from the N-terminus, the 378-residue chain is D-alanine--D-alanine ligase (378 aa).

The ATP-grasp domain occupies 141–347; the sequence is KKLLTLNGIR…YSELIDQLIQ (207 aa). ATP is bound at residue 171–226; that stretch reads AEELGETLFVKPARQGSSVGIHKVRNEEEYNAALEDGFKYDYKILVEEAIKNPREV. Positions 301, 314, and 316 each coordinate Mg(2+).

Belongs to the D-alanine--D-alanine ligase family. Mg(2+) serves as cofactor. It depends on Mn(2+) as a cofactor.

The protein localises to the cytoplasm. The enzyme catalyses 2 D-alanine + ATP = D-alanyl-D-alanine + ADP + phosphate + H(+). The protein operates within cell wall biogenesis; peptidoglycan biosynthesis. Its function is as follows. Cell wall formation. The sequence is that of D-alanine--D-alanine ligase from Ligilactobacillus salivarius (strain UCC118) (Lactobacillus salivarius).